The primary structure comprises 762 residues: Lysyl oxidase homolog 2B (762 aa).

A signal peptide spans 1–20 (MLALWSISFVLLCSWRLSYA). 4 consecutive SRCR domains span residues 53–154 (LRLA…VVCS), 183–292 (IRPI…VSCI), 316–417 (VRLR…VKCN), and 427–536 (LRLS…VSCS). Intrachain disulfides connect cysteine 79/cysteine 143, cysteine 92/cysteine 153, cysteine 123/cysteine 133, cysteine 213/cysteine 281, cysteine 226/cysteine 291, cysteine 260/cysteine 270, cysteine 341/cysteine 406, cysteine 354/cysteine 416, and cysteine 385/cysteine 395. N-linked (GlcNAc...) asparagine glycosylation is present at asparagine 278. Asparagine 447 carries N-linked (GlcNAc...) asparagine glycosylation. Cystine bridges form between cysteine 456/cysteine 522, cysteine 469/cysteine 535, and cysteine 503/cysteine 513. Positions 540–742 (PDLVLNPQVV…WMYNCHIGGS (203 aa)) are lysyl-oxidase like. The Ca(2+) site is built by aspartate 541 and leucine 542. Intrachain disulfides connect cysteine 565–cysteine 616, cysteine 571–cysteine 686, cysteine 648–cysteine 664, and cysteine 654–cysteine 676. Cu cation is bound by residues histidine 617, histidine 619, and histidine 621. Asparagine 635 carries N-linked (GlcNAc...) asparagine glycosylation. A cross-link (lysine tyrosylquinone (Lys-Tyr)) is located at residues 644-680 (KASFCLEDSECDEGIEKRYECANFGEQGITVGCWDTY). Residue tyrosine 680 is modified to 2',4',5'-topaquinone. Glutamate 713, aspartate 715, asparagine 718, and asparagine 719 together coordinate Ca(2+). Cysteine 723 and cysteine 737 are joined by a disulfide.

Belongs to the lysyl oxidase family. Cu cation serves as cofactor. The cofactor is lysine tyrosylquinone residue. The lysine tyrosylquinone cross-link (LTQ) is generated by condensation of the epsilon-amino group of a lysine with a topaquinone produced by oxidation of tyrosine.

Its subcellular location is the secreted. It is found in the extracellular space. It localises to the extracellular matrix. The protein localises to the basement membrane. The protein resides in the nucleus. Its subcellular location is the chromosome. It is found in the endoplasmic reticulum. The enzyme catalyses L-lysyl-[protein] + O2 + H2O = (S)-2-amino-6-oxohexanoyl-[protein] + H2O2 + NH4(+). In terms of biological role, mediates the post-translational oxidative deamination of lysine residues on target proteins leading to the formation of deaminated lysine (allysine). Acts as a transcription corepressor and specifically mediates deamination of trimethylated 'Lys-4' of histone H3 (H3K4me3), a specific tag for epigenetic transcriptional activation. Shows no activity against histone H3 when it is trimethylated on 'Lys-9' (H3K9me3) or 'Lys-27' (H3K27me3) or when 'Lys-4' is monomethylated (H3K4me1) or dimethylated (H3K4me2). Also mediates deamination of methylated TAF10, a member of the transcription factor IID (TFIID) complex, which induces release of TAF10 from promoters, leading to inhibition of TFIID-dependent transcription. LOXL2-mediated deamination of TAF10 results in transcriptional repression of genes required for embryonic stem cell pluripotency. Involved in epithelial to mesenchymal transition (EMT) and participates in repression of E-cadherin, probably by mediating deamination of histone H3. When secreted into the extracellular matrix, promotes cross-linking of extracellular matrix proteins by mediating oxidative deamination of peptidyl lysine residues in precursors to fibrous collagen and elastin. Acts as a regulator of sprouting angiogenesis, probably via collagen IV scaffolding. Acts as a regulator of chondrocyte differentiation, probably by regulating expression of factors that control chondrocyte differentiation. Required with loxl2a for correct expression of Sox2 and for neural differentiation. This Danio rerio (Zebrafish) protein is Lysyl oxidase homolog 2B (loxl2b).